Here is a 1403-residue protein sequence, read N- to C-terminus: Perilipin-4 (1403 aa).

A disordered region spans residues 1-21; it reads MSASGDGTRVPPKSKGKTLSS. Phosphoserine occurs at positions 25 and 31. Residues 33–70 form a disordered region; sequence RNLVSHTHSSTSTKDLQTATDPSGTPAPSSKVSTNSQM. Tandem repeats lie at residues 104 to 136, 137 to 169, 170 to 202, 203 to 235, 236 to 268, 269 to 301, 302 to 334, 335 to 367, 368 to 400, 401 to 433, 434 to 466, 467 to 499, 500 to 532, 533 to 565, 566 to 598, 599 to 631, 632 to 664, 665 to 697, 698 to 730, 731 to 763, 764 to 796, 797 to 829, 830 to 862, 863 to 895, 896 to 928, 929 to 961, 962 to 994, 995 to 1027, and 1028 to 1060. A 29 X 33 AA approximate tandem repeat region spans residues 104 to 1060; the sequence is GVFGIMDAAK…VTSAMNMAKG (957 aa). A Phosphoserine modification is found at Ser1281. A Phosphothreonine modification is found at Thr1287.

Belongs to the perilipin family. As to expression, specifically expressed in white adipose tissue and also weakly detected in heart and skeletal muscle (at protein level).

Its subcellular location is the cell membrane. It localises to the cytoplasm. It is found in the lipid droplet. In terms of biological role, may play a role in triacylglycerol packaging into adipocytes. May function as a coat protein involved in the biogenesis of lipid droplets. This chain is Perilipin-4 (Plin4), found in Mus musculus (Mouse).